The sequence spans 130 residues: Glycine cleavage system H protein (130 aa).

Residues 25–106 (VALIGITDFA…PFDTWMVKLK (82 aa)) enclose the Lipoyl-binding domain. Position 66 is an N6-lipoyllysine (lysine 66).

Belongs to the GcvH family. In terms of assembly, the glycine cleavage system is composed of four proteins: P, T, L and H. (R)-lipoate serves as cofactor.

Functionally, the glycine cleavage system catalyzes the degradation of glycine. The H protein shuttles the methylamine group of glycine from the P protein to the T protein. The sequence is that of Glycine cleavage system H protein from Leptospira biflexa serovar Patoc (strain Patoc 1 / Ames).